A 1778-amino-acid polypeptide reads, in one-letter code: Nuclear receptor corepressor 1 (1778 aa).

In terms of domain architecture, SANT spans 125-176; it reads DRLEEWSPEERSLFKSRQADHVKIFHGLTEFFVDKTASDLVLFYYMNKKTED. A Myb-like domain is found at 356–398; the sequence is WTDDEKTKLVTLINSSPTLDWVSISEGMNRRPNECKMQYDAMN. The segment covering 409–421 has biased composition (acidic residues); that stretch reads VDEEDGNGQEEGG. Disordered stretches follow at residues 409-671, 992-1024, 1195-1218, 1276-1339, 1414-1434, and 1646-1718; these read VDEE…TVST, SLTPSETSASATPPAHRPRAATTVGSKMPAGRS, KLQQQHQDAQKRKLEAPVSSATPQ, QHLQ…SRSV, PPKTPASIKRLQPTEGPRTLS, and AAPT…PPLP. Low complexity-rich tracts occupy residues 431 to 442 and 450 to 469; these read SSAAARRSGLAR and TPRAPRSAGGRRTGGAVTRA. Positions 478 to 493 are enriched in acidic residues; it reads DLGEEIDEMEIEDNDE. Residues 494–513 are compositionally biased toward basic and acidic residues; it reads DASRGSRGKDSKAPSDRDGS. Acidic residues-rich tracts occupy residues 517 to 545 and 599 to 616; these read MEGDSPEGQDQDADQDQDQDQDVDEEEEE and ESDDGEEDNDILEIDVDE. 2 stretches are compositionally biased toward low complexity: residues 626–639 and 649–671; these read SSSSHLIGSSSVGG and LVQQQQQQQPQAQSAAPPVTVST. The span at 1276 to 1285 shows a compositional bias: low complexity; the sequence is QHLQQQQQHH. Residues 1687–1696 show a composition bias toward low complexity; that stretch reads SSVNSNVSDV.

Belongs to the N-CoR nuclear receptor corepressors family. As to quaternary structure, interacts with gex-3. Interacts (via C-terminus) with nhr-60. In terms of tissue distribution, in larvae, expressed in pharyngeal neurons, ventral and dorsal nerve cords, tail neurons, egg-laying neurons and egg-laying muscles. Detected in the neurons of the pharyngeal nerve ring, head neurons, tail neurons and egg-laying muscles in adults. Detected in male-specific tail ganglia and rays in males.

It localises to the nucleus. Its function is as follows. Mediates transcriptional repression by certain nuclear receptors. Plays a role in development and neuronal function. May play a role in muscle-specific oxidative mitochondrial metabolism. The polypeptide is Nuclear receptor corepressor 1 (Caenorhabditis elegans).